The sequence spans 471 residues: Metal tolerance protein C1 (471 aa).

Topologically, residues 1–78 (MGIIRFQILN…PGEEGEKIFR (78 aa)) are cytoplasmic. A helical transmembrane segment spans residues 79–99 (LGLTADIGLSVAKALTGYLCG). Over 100 to 101 (ST) the chain is Vacuolar. Residues 102 to 122 (AIIADAAHSVSDVVLSGVALV) form a helical membrane-spanning segment. Over 123-144 (SYRAANVPKDKEHPYGHGKFET) the chain is Cytoplasmic. Residues 145–165 (LGALGISAMLLATGSGIAWHA) traverse the membrane as a helical segment. At 166–192 (LDLLSIALSAAPEVIHSGHHHGIDMNH) the chain is on the vacuolar side. Residues 193 to 213 (PILALTVTIASISIKEGLYWI) traverse the membrane as a helical segment. Residues 214-236 (TKRAGEKQGSGLMMANAWHHRSD) are Cytoplasmic-facing. A helical transmembrane segment spans residues 237 to 257 (AISSLVALVGVGGSILGVNFL). Residues 258 to 423 (DPLAGLVVST…RITPHLLHSK (166 aa)) are Vacuolar-facing. A helical transmembrane segment spans residues 424–444 (ILLQIVVAMPSTMSIQDVMIA). The Cytoplasmic portion of the chain corresponds to 445 to 471 (AEHAEKEILKAAPNVARVSIQLSLNSE).

It belongs to the cation diffusion facilitator (CDF) transporter (TC 2.A.4) family.

The protein resides in the vacuole membrane. Involved in sequestration of excess metal in the cytoplasm into vacuoles to maintain metal homeostasis. The protein is Metal tolerance protein C1 (MTPC1) of Arabidopsis thaliana (Mouse-ear cress).